A 334-amino-acid polypeptide reads, in one-letter code: DNA-directed RNA polymerase subunit alpha (334 aa).

The interval 1–234 is alpha N-terminal domain (alpha-NTD); that stretch reads MQTKVNELLK…SQLAAFVELQ (234 aa). Positions 248–334 are alpha C-terminal domain (alpha-CTD); sequence IDPILLRPVD…LKDQDKKASG (87 aa).

This sequence belongs to the RNA polymerase alpha chain family. In terms of assembly, homodimer. The RNAP catalytic core consists of 2 alpha, 1 beta, 1 beta' and 1 omega subunit. When a sigma factor is associated with the core the holoenzyme is formed, which can initiate transcription.

The catalysed reaction is RNA(n) + a ribonucleoside 5'-triphosphate = RNA(n+1) + diphosphate. DNA-dependent RNA polymerase catalyzes the transcription of DNA into RNA using the four ribonucleoside triphosphates as substrates. This chain is DNA-directed RNA polymerase subunit alpha, found in Thioalkalivibrio sulfidiphilus (strain HL-EbGR7).